Here is a 476-residue protein sequence, read N- to C-terminus: ATP synthase subunit beta (476 aa).

Residue 157–164 (GGAGVGKT) participates in ATP binding.

Belongs to the ATPase alpha/beta chains family. F-type ATPases have 2 components, CF(1) - the catalytic core - and CF(0) - the membrane proton channel. CF(1) has five subunits: alpha(3), beta(3), gamma(1), delta(1), epsilon(1). CF(0) has three main subunits: a(1), b(2) and c(9-12). The alpha and beta chains form an alternating ring which encloses part of the gamma chain. CF(1) is attached to CF(0) by a central stalk formed by the gamma and epsilon chains, while a peripheral stalk is formed by the delta and b chains.

Its subcellular location is the cell membrane. It catalyses the reaction ATP + H2O + 4 H(+)(in) = ADP + phosphate + 5 H(+)(out). Produces ATP from ADP in the presence of a proton gradient across the membrane. The catalytic sites are hosted primarily by the beta subunits. In Mycoplasma genitalium (strain ATCC 33530 / DSM 19775 / NCTC 10195 / G37) (Mycoplasmoides genitalium), this protein is ATP synthase subunit beta.